The primary structure comprises 129 residues: Small ribosomal subunit protein uS11 (129 aa).

The protein belongs to the universal ribosomal protein uS11 family. As to quaternary structure, part of the 30S ribosomal subunit. Interacts with proteins S7 and S18. Binds to IF-3.

Its function is as follows. Located on the platform of the 30S subunit, it bridges several disparate RNA helices of the 16S rRNA. Forms part of the Shine-Dalgarno cleft in the 70S ribosome. In Bartonella henselae (strain ATCC 49882 / DSM 28221 / CCUG 30454 / Houston 1) (Rochalimaea henselae), this protein is Small ribosomal subunit protein uS11.